The sequence spans 283 residues: MPTDMQDVKDIVREKYASAALKVATGGASCCGSSALPGASPITSNLYDAAQEQGLPAEAMLASLGCGNPTALAQLSPGETVLDLGSGGGIDVLLSARRVGPTGKAYGLDMTDEMLALARDNQRKAGLDNVEFLKGEIEAIPLPDHSVDVIISNCVINLSGDKDRVLREAFRVLKPGGRFAVSDVVTRGEIPEALRRDVLLWVGCLAGALDEADYVAKLAAAGFAQISIEPTRVYDIEDAREFLTGKGIDVDALAPQMQDKFFSGFVRATKPGADGEVPARCCG.

This sequence belongs to the methyltransferase superfamily. Arsenite methyltransferase family.

It catalyses the reaction arsenic triglutathione + [thioredoxin]-dithiol + S-adenosyl-L-methionine + 2 H2O = methylarsonous acid + [thioredoxin]-disulfide + 3 glutathione + S-adenosyl-L-homocysteine + H(+). It carries out the reaction arsenic triglutathione + 2 [thioredoxin]-dithiol + 2 S-adenosyl-L-methionine + H2O = dimethylarsinous acid + 2 [thioredoxin]-disulfide + 3 glutathione + 2 S-adenosyl-L-homocysteine + 2 H(+). The enzyme catalyses arsenic triglutathione + 3 [thioredoxin]-dithiol + 3 S-adenosyl-L-methionine = trimethylarsine + 3 [thioredoxin]-disulfide + 3 glutathione + 3 S-adenosyl-L-homocysteine + 3 H(+). Catalyzes the transfer of a methyl group from AdoMet to arsenite, producing methylated arsenicals. Involved in the conversion of As(III) to a number of di- and trimethylated species, with trimethylarsine as the end product. Reduces the arsenic toxicity in the cell and may contribute to the global arsenic cycling. The polypeptide is Arsenite methyltransferase (Rhodopseudomonas palustris (strain ATCC BAA-98 / CGA009)).